We begin with the raw amino-acid sequence, 280 residues long: Ribonuclease P protein subunit p38 (280 aa).

Ala-2 carries the post-translational modification N-acetylalanine. Residues Ser-12, Ser-221, and Ser-230 each carry the phosphoserine modification. The disordered stretch occupies residues 202–227 (WLPDRTQGPTDSLETEPSESQDNEIL). Positions 214–226 (LETEPSESQDNEI) are enriched in acidic residues. A disordered region spans residues 254 to 280 (QPLKIKKLIPNPSKIRKPPKSKKSISK). Basic residues predominate over residues 267–280 (KIRKPPKSKKSISK).

The protein belongs to the eukaryotic ribosomal protein eL8 family. As to quaternary structure, component of nuclear RNase P and RNase MRP ribonucleoproteins. RNase P consists of a catalytic RNA moiety and about 10 protein subunits; POP1, POP4, POP5, POP7, RPP14, RPP21, RPP25, RPP30, RPP38 and RPP40. Within the RNase P complex, POP1, POP7 and RPP25 form the 'finger' subcomplex, POP5, RPP14, RPP40 and homodimeric RPP30 form the 'palm' subcomplex, and RPP21, POP4 and RPP38 form the 'wrist' subcomplex. All subunits of the RNase P complex interact with the catalytic RNA. Several subunits of RNase P are also part of the RNase MRP complex. RNase MRP consists of a catalytic RNA moiety and about 8 protein subunits; POP1, POP7, RPP25, RPP30, RPP38, RPP40 and possibly also POP4 and POP5.

Its subcellular location is the nucleus. It localises to the nucleolus. Functionally, component of ribonuclease P, a ribonucleoprotein complex that generates mature tRNA molecules by cleaving their 5'-ends. Also a component of the MRP ribonuclease complex, which cleaves pre-rRNA sequences. This is Ribonuclease P protein subunit p38 (Rpp38) from Mus musculus (Mouse).